The primary structure comprises 51 residues: Large ribosomal subunit protein eL39 (51 aa).

It belongs to the eukaryotic ribosomal protein eL39 family.

This is Large ribosomal subunit protein eL39 from Methanopyrus kandleri (strain AV19 / DSM 6324 / JCM 9639 / NBRC 100938).